The sequence spans 156 residues: MVDILGERHLVTCKGATVEAEAALQNKVVALYFAAARCAPSRDFTPLLCDFYTALVAEARRPAPFEVVFVSADGSSQEMLDFMRELHGAWLALPFHDPYRHELRKRYNVTAIPKLVIVKQNGEVITNKGRKQIRERGLACFQDWVEAADIFQNFSV.

Residues 9–147 (HLVTCKGATV…LACFQDWVEA (139 aa)) form the Thioredoxin domain.

It belongs to the nucleoredoxin family.

In terms of biological role, may be involved in the maintenance of both the function and the viability of sensory neurons, including photoreceptors and olfactory neurons. The chain is Nucleoredoxin-like protein 2 (NXNL2) from Homo sapiens (Human).